The following is an 864-amino-acid chain: DNA mismatch repair protein MutS (864 aa).

Residue 621-628 (GPNMGGKS) participates in ATP binding. A disordered region spans residues 804–833 (ETGKPESPAPVASRSSKPSMQADMFAEPQP).

This sequence belongs to the DNA mismatch repair MutS family.

In terms of biological role, this protein is involved in the repair of mismatches in DNA. It is possible that it carries out the mismatch recognition step. This protein has a weak ATPase activity. The chain is DNA mismatch repair protein MutS from Teredinibacter turnerae (strain ATCC 39867 / T7901).